A 580-amino-acid polypeptide reads, in one-letter code: Laccase-20 (580 aa).

Residues 1–23 form the signal peptide; that stretch reads MVASLLCTVAVAVLAVAAVGGEA. 2 consecutive Plastocyanin-like domains span residues 31–147 and 156–310; these read VVHE…PRDG and KDVP…YTSA. N-linked (GlcNAc...) asparagine glycans are attached at residues Asn36 and Asn42. Positions 81 and 83 each coordinate Cu cation. A glycan (N-linked (GlcNAc...) asparagine) is linked at Asn115. Residues His126 and His128 each contribute to the Cu cation site. N-linked (GlcNAc...) asparagine glycans are attached at residues Asn200, Asn339, Asn392, Asn429, and Asn460. One can recognise a Plastocyanin-like 3 domain in the interval 419–561; it reads DFPVRPPRPY…ATAFIVEDGP (143 aa). Cu cation-binding residues include Asn478, His481, His483, His540, Cys541, His542, His546, and Met551. Positions 560 to 580 are disordered; it reads GPTPETSLPPPPPEFKRCDAS.

It belongs to the multicopper oxidase family. Cu cation is required as a cofactor.

The protein resides in the secreted. The protein localises to the extracellular space. It is found in the apoplast. It catalyses the reaction 4 hydroquinone + O2 = 4 benzosemiquinone + 2 H2O. Lignin degradation and detoxification of lignin-derived products. In Oryza sativa subsp. indica (Rice), this protein is Laccase-20 (LAC20).